The primary structure comprises 310 residues: Putative S-adenosyl-L-methionine-dependent methyltransferase MUL_2766 (310 aa).

S-adenosyl-L-methionine-binding positions include Asp131 and 160 to 161 (DL).

Belongs to the UPF0677 family.

Its function is as follows. Exhibits S-adenosyl-L-methionine-dependent methyltransferase activity. The protein is Putative S-adenosyl-L-methionine-dependent methyltransferase MUL_2766 of Mycobacterium ulcerans (strain Agy99).